Consider the following 76-residue polypeptide: Small ribosomal subunit protein bS18 (76 aa).

It belongs to the bacterial ribosomal protein bS18 family. Part of the 30S ribosomal subunit. Forms a tight heterodimer with protein bS6.

Its function is as follows. Binds as a heterodimer with protein bS6 to the central domain of the 16S rRNA, where it helps stabilize the platform of the 30S subunit. This chain is Small ribosomal subunit protein bS18, found in Tolumonas auensis (strain DSM 9187 / NBRC 110442 / TA 4).